The primary structure comprises 77 residues: Small ribosomal subunit protein bS16 (77 aa).

This sequence belongs to the bacterial ribosomal protein bS16 family.

The chain is Small ribosomal subunit protein bS16 from Helicobacter hepaticus (strain ATCC 51449 / 3B1).